The sequence spans 466 residues: 3-isopropylmalate dehydratase large subunit (466 aa).

3 residues coordinate [4Fe-4S] cluster: C347, C407, and C410.

The protein belongs to the aconitase/IPM isomerase family. LeuC type 1 subfamily. Heterodimer of LeuC and LeuD. [4Fe-4S] cluster is required as a cofactor.

It carries out the reaction (2R,3S)-3-isopropylmalate = (2S)-2-isopropylmalate. It functions in the pathway amino-acid biosynthesis; L-leucine biosynthesis; L-leucine from 3-methyl-2-oxobutanoate: step 2/4. Its function is as follows. Catalyzes the isomerization between 2-isopropylmalate and 3-isopropylmalate, via the formation of 2-isopropylmaleate. In Klebsiella pneumoniae (strain 342), this protein is 3-isopropylmalate dehydratase large subunit.